A 95-amino-acid polypeptide reads, in one-letter code: uncharacterized protein (95 aa).

Composition is skewed to basic and acidic residues over residues 1-28 (MRRA…KERC) and 41-53 (DERV…KGRP). The disordered stretch occupies residues 1–73 (MRRAEVKRSA…RTSRAGSSWQ (73 aa)).

This is an uncharacterized protein from Homo sapiens (Human).